A 132-amino-acid chain; its full sequence is Small ribosomal subunit protein uS8c (132 aa).

This sequence belongs to the universal ribosomal protein uS8 family. In terms of assembly, part of the 30S ribosomal subunit.

Its subcellular location is the plastid. It localises to the chloroplast. In terms of biological role, one of the primary rRNA binding proteins, it binds directly to 16S rRNA central domain where it helps coordinate assembly of the platform of the 30S subunit. The protein is Small ribosomal subunit protein uS8c (rps8) of Chaetosphaeridium globosum (Charophycean green alga).